A 246-amino-acid polypeptide reads, in one-letter code: Trypsin V-B (246 aa).

The N-terminal stretch at 1-15 (MKICIFFTLLGTVAA) is a signal peptide. Residues 16–24 (FPTEDNDDR) constitute a propeptide, activation peptide. Residues 25 to 244 (IVGGYTCQEH…YLNWIQQTVA (220 aa)) form the Peptidase S1 domain. Intrachain disulfides connect C31-C160, C49-C65, C133-C233, C140-C206, C171-C185, and C196-C220. The active-site Charge relay system is H64. The Ca(2+) site is built by E76, N78, and E86. The active-site Charge relay system is D108. The active-site Charge relay system is the S200.

It belongs to the peptidase S1 family. Requires Ca(2+) as cofactor.

The protein resides in the secreted. Its subcellular location is the extracellular space. It catalyses the reaction Preferential cleavage: Arg-|-Xaa, Lys-|-Xaa.. This Rattus norvegicus (Rat) protein is Trypsin V-B.